Consider the following 250-residue polypeptide: UPF0524 protein C3orf70 (250 aa).

Positions glutamate 201–valine 250 are disordered. Positions serine 202 to glutamate 229 are enriched in acidic residues.

This sequence belongs to the UPF0524 family.

Functionally, may play a role in neuronal and neurobehavioral development. The protein is UPF0524 protein C3orf70 (C3orf70) of Homo sapiens (Human).